Reading from the N-terminus, the 226-residue chain is Phosphoribosylformylglycinamidine synthase subunit PurQ (226 aa).

The 224-residue stretch at Arg-2 to Asn-225 folds into the Glutamine amidotransferase type-1 domain. Residue Cys-86 is the Nucleophile of the active site. Residues His-194 and Glu-196 contribute to the active site.

As to quaternary structure, part of the FGAM synthase complex composed of 1 PurL, 1 PurQ and 2 PurS subunits.

It is found in the cytoplasm. The enzyme catalyses N(2)-formyl-N(1)-(5-phospho-beta-D-ribosyl)glycinamide + L-glutamine + ATP + H2O = 2-formamido-N(1)-(5-O-phospho-beta-D-ribosyl)acetamidine + L-glutamate + ADP + phosphate + H(+). The catalysed reaction is L-glutamine + H2O = L-glutamate + NH4(+). It functions in the pathway purine metabolism; IMP biosynthesis via de novo pathway; 5-amino-1-(5-phospho-D-ribosyl)imidazole from N(2)-formyl-N(1)-(5-phospho-D-ribosyl)glycinamide: step 1/2. Its function is as follows. Part of the phosphoribosylformylglycinamidine synthase complex involved in the purines biosynthetic pathway. Catalyzes the ATP-dependent conversion of formylglycinamide ribonucleotide (FGAR) and glutamine to yield formylglycinamidine ribonucleotide (FGAM) and glutamate. The FGAM synthase complex is composed of three subunits. PurQ produces an ammonia molecule by converting glutamine to glutamate. PurL transfers the ammonia molecule to FGAR to form FGAM in an ATP-dependent manner. PurS interacts with PurQ and PurL and is thought to assist in the transfer of the ammonia molecule from PurQ to PurL. This chain is Phosphoribosylformylglycinamidine synthase subunit PurQ, found in Alkaliphilus metalliredigens (strain QYMF).